Here is a 206-residue protein sequence, read N- to C-terminus: ATP-dependent Clp protease proteolytic subunit 1 (206 aa).

The active-site Nucleophile is the Ser100. His125 is a catalytic residue.

Belongs to the peptidase S14 family. As to quaternary structure, fourteen ClpP subunits assemble into 2 heptameric rings which stack back to back to give a disk-like structure with a central cavity, resembling the structure of eukaryotic proteasomes.

Its subcellular location is the cytoplasm. It catalyses the reaction Hydrolysis of proteins to small peptides in the presence of ATP and magnesium. alpha-casein is the usual test substrate. In the absence of ATP, only oligopeptides shorter than five residues are hydrolyzed (such as succinyl-Leu-Tyr-|-NHMec, and Leu-Tyr-Leu-|-Tyr-Trp, in which cleavage of the -Tyr-|-Leu- and -Tyr-|-Trp bonds also occurs).. Functionally, cleaves peptides in various proteins in a process that requires ATP hydrolysis. Has a chymotrypsin-like activity. Plays a major role in the degradation of misfolded proteins. This is ATP-dependent Clp protease proteolytic subunit 1 from Myxococcus xanthus (strain DK1622).